We begin with the raw amino-acid sequence, 84 residues long: Cytochrome b559 subunit alpha (84 aa).

Residues 24 to 38 traverse the membrane as a helical segment; it reads IIHAVTLPAIFIAGF. A heme-binding site is contributed by His-26.

It belongs to the PsbE/PsbF family. As to quaternary structure, heterodimer of an alpha subunit and a beta subunit. PSII is composed of 1 copy each of membrane proteins PsbA, PsbB, PsbC, PsbD, PsbE, PsbF, PsbH, PsbI, PsbJ, PsbK, PsbL, PsbM, PsbT, PsbX, PsbY, Psb30/Ycf12, peripheral proteins PsbO, CyanoQ (PsbQ), PsbU, PsbV and a large number of cofactors. It forms dimeric complexes. Heme b is required as a cofactor.

It localises to the cellular thylakoid membrane. In terms of biological role, this b-type cytochrome is tightly associated with the reaction center of photosystem II (PSII). PSII is a light-driven water:plastoquinone oxidoreductase that uses light energy to abstract electrons from H(2)O, generating O(2) and a proton gradient subsequently used for ATP formation. It consists of a core antenna complex that captures photons, and an electron transfer chain that converts photonic excitation into a charge separation. The polypeptide is Cytochrome b559 subunit alpha (Prochlorococcus marinus subsp. pastoris (strain CCMP1986 / NIES-2087 / MED4)).